The following is a 118-amino-acid chain: Hisactophilin-1 (118 aa).

Glycine 2 carries the N-myristoyl glycine lipid modification. Positions 8 to 109 (SHHGHFLSAE…HVSTKEHHDH (102 aa)) are contains several HHXH repeats. 2 tandem repeats follow at residues 34–46 (FHVE…VALK) and 74–86 (FHLE…VSIK). The segment at 34–86 (FHVENHGGKVALKTHCGKYLSIGDHKQVYLSHHLHGDHSLFHLEHHGGKVSIK) is 2 X 13 AA approximate repeats.

Belongs to the hisactophilin family. Homodimer or heterodimer of hatA and hatB, linked by a disulfide bond. Phosphorylated.

The protein resides in the cytoplasm. Its subcellular location is the cell membrane. Its function is as follows. May act as an intracellular pH sensor that links chemotactic signals to responses in the microfilament system of the cells by nucleating actin polymerization or stabilizing the filaments. The polypeptide is Hisactophilin-1 (hatA) (Dictyostelium discoideum (Social amoeba)).